Here is a 219-residue protein sequence, read N- to C-terminus: Putative NAD(P)H nitroreductase SSP0379 (219 aa).

This sequence belongs to the nitroreductase family. FMN is required as a cofactor.

The polypeptide is Putative NAD(P)H nitroreductase SSP0379 (Staphylococcus saprophyticus subsp. saprophyticus (strain ATCC 15305 / DSM 20229 / NCIMB 8711 / NCTC 7292 / S-41)).